The primary structure comprises 352 residues: tRNA pseudouridine synthase D (352 aa).

The Nucleophile role is filled by D81. One can recognise a TRUD domain in the interval 157–303 (GVPNYFGAQR…MDHERRILRL (147 aa)).

The protein belongs to the pseudouridine synthase TruD family.

The enzyme catalyses uridine(13) in tRNA = pseudouridine(13) in tRNA. Responsible for synthesis of pseudouridine from uracil-13 in transfer RNAs. The chain is tRNA pseudouridine synthase D from Pseudomonas entomophila (strain L48).